Consider the following 130-residue polypeptide: SGSCTVRTCWRQLAPFTEMGRSLKQRYDVAVKVLSMTNEAAGERTIARSRRRPREQRGQRRPKVSDGALTPRGIDLVYVEDSPSYCRASRYSPGTANRSCQKGRNCDSICCGRGYNTRVSSVQKPCQCQV.

A lipid anchor (O-palmitoleoyl serine; by PORCN) is attached at Ser1. The segment at 41–69 (AGERTIARSRRRPREQRGQRRPKVSDGAL) is disordered. Basic residues predominate over residues 47 to 62 (ARSRRRPREQRGQRRP). The N-linked (GlcNAc...) asparagine glycan is linked to Asn97. The cysteines at positions 100 and 111 are disulfide-linked.

Belongs to the Wnt family. Palmitoleoylation is required for efficient binding to frizzled receptors. Depalmitoleoylation leads to Wnt signaling pathway inhibition.

It is found in the secreted. It localises to the extracellular space. The protein localises to the extracellular matrix. In terms of biological role, ligand for members of the frizzled family of seven transmembrane receptors. Probable developmental protein. May be a signaling molecule which affects the development of discrete regions of tissues. Is likely to signal over only few cell diameters. In Eptatretus stoutii (Pacific hagfish), this protein is Protein Wnt-9 (WNT-9).